The sequence spans 378 residues: Isobutylamine N-hydroxylase (378 aa).

As to quaternary structure, exists in dimeric or trimeric form depending upon buffer conditions. It can form an isobutylamine N-hydroxylase two component enzyme system formed of a flavin reductase component (VlmR) and a monooxygenase component (VlmH).

The catalysed reaction is 2-methylpropan-1-amine + FADH2 + O2 = N-(2-methylpropyl)hydroxylamine + FAD + H2O + 2 H(+). It catalyses the reaction 2-methylpropan-1-amine + FMNH2 + O2 = N-(2-methylpropyl)hydroxylamine + FMN + H2O + 2 H(+). With respect to regulation, inhibited by 5',5'-dithio-bis(2-nitrobenzoic acid) (DTNB) and 4-(hydroxymercuri)benzoic acid (p-HMB). In terms of biological role, involved in the biosynthesis of the azoxy antibiotic valanimycin, which has an antitumor activity. Catalyzes the oxidation of isobutylamine to isobutylhydroxylamine via the formation of a flavin 4a-hydroperoxide. Unlike other known N-hydroxylases, isobutylamine N-hydroxylase cannot carry out the reduction of the flavin cofactor and requires the NADPH-flavin oxidoreductase VlmR. Also able to oxidize propan-1-amine, butan-1-amine, butan-2-amine and benzylamine. It has a similar activity with either FMNH(2) or FADH(2). In Streptomyces viridifaciens, this protein is Isobutylamine N-hydroxylase.